The primary structure comprises 647 residues: Threonine--tRNA ligase (647 aa).

The 61-residue stretch at 1-61 (MINITFPDGA…TEDGSIEIVT (61 aa)) folds into the TGS domain. Residues 242 to 540 (DHRKLGKELD…LIENYKGAFP (299 aa)) form a catalytic region. Zn(2+)-binding residues include C336, H387, and H517.

The protein belongs to the class-II aminoacyl-tRNA synthetase family. Homodimer. Requires Zn(2+) as cofactor.

Its subcellular location is the cytoplasm. The enzyme catalyses tRNA(Thr) + L-threonine + ATP = L-threonyl-tRNA(Thr) + AMP + diphosphate + H(+). Functionally, catalyzes the attachment of threonine to tRNA(Thr) in a two-step reaction: L-threonine is first activated by ATP to form Thr-AMP and then transferred to the acceptor end of tRNA(Thr). Also edits incorrectly charged L-seryl-tRNA(Thr). The chain is Threonine--tRNA ligase from Streptococcus pneumoniae serotype 4 (strain ATCC BAA-334 / TIGR4).